The chain runs to 96 residues: Probable Fe(2+)-trafficking protein (96 aa).

The disordered stretch occupies residues Leu21 to Thr40.

It belongs to the Fe(2+)-trafficking protein family.

Its function is as follows. Could be a mediator in iron transactions between iron acquisition and iron-requiring processes, such as synthesis and/or repair of Fe-S clusters in biosynthetic enzymes. The chain is Probable Fe(2+)-trafficking protein from Psychrobacter arcticus (strain DSM 17307 / VKM B-2377 / 273-4).